The chain runs to 634 residues: Ankyrin repeat protein OPG025 (634 aa).

6 ANK repeats span residues Asp36 to Ile69, Asn70 to Ser100, Asn103 to Ser134, Met175 to Tyr211, Ile307 to Arg337, and His412 to Ile441.

This sequence belongs to the orthopoxvirus OPG025 family. In terms of assembly, interacts with components of host SCF complex CUL1 and SKP1 and components of the cullin deneddylation/COP9 signalosome complex subunits COPS7A and COPS7B.

Its function is as follows. Plays a role in the inhibition of host immune repsonse by counteracting the action of interferons on early events in the viral replication cycle. The chain is Ankyrin repeat protein OPG025 (OPG035) from Vaccinia virus (strain Western Reserve) (VACV).